A 108-amino-acid chain; its full sequence is Thiosulfate sulfurtransferase GlpE (108 aa).

A Rhodanese domain is found at 17–105; the sequence is QEKEAVLVDI…WQRQFPAEVA (89 aa). The active-site Cysteine persulfide intermediate is C65.

It belongs to the GlpE family.

It localises to the cytoplasm. The enzyme catalyses thiosulfate + hydrogen cyanide = thiocyanate + sulfite + 2 H(+). It carries out the reaction thiosulfate + [thioredoxin]-dithiol = [thioredoxin]-disulfide + hydrogen sulfide + sulfite + 2 H(+). Its function is as follows. Transferase that catalyzes the transfer of sulfur from thiosulfate to thiophilic acceptors such as cyanide or dithiols. May function in a CysM-independent thiosulfate assimilation pathway by catalyzing the conversion of thiosulfate to sulfite, which can then be used for L-cysteine biosynthesis. In Escherichia coli O157:H7, this protein is Thiosulfate sulfurtransferase GlpE.